The following is a 268-amino-acid chain: Ribosomal RNA small subunit methyltransferase A (268 aa).

S-adenosyl-L-methionine is bound by residues asparagine 18, leucine 20, glycine 45, glutamate 66, aspartate 91, and asparagine 112.

The protein belongs to the class I-like SAM-binding methyltransferase superfamily. rRNA adenine N(6)-methyltransferase family. RsmA subfamily.

It localises to the cytoplasm. The enzyme catalyses adenosine(1518)/adenosine(1519) in 16S rRNA + 4 S-adenosyl-L-methionine = N(6)-dimethyladenosine(1518)/N(6)-dimethyladenosine(1519) in 16S rRNA + 4 S-adenosyl-L-homocysteine + 4 H(+). Its function is as follows. Specifically dimethylates two adjacent adenosines (A1518 and A1519) in the loop of a conserved hairpin near the 3'-end of 16S rRNA in the 30S particle. May play a critical role in biogenesis of 30S subunits. The sequence is that of Ribosomal RNA small subunit methyltransferase A from Shewanella oneidensis (strain ATCC 700550 / JCM 31522 / CIP 106686 / LMG 19005 / NCIMB 14063 / MR-1).